A 193-amino-acid polypeptide reads, in one-letter code: Putative RNA methyltransferase At5g10620 (193 aa).

S-adenosyl-L-methionine is bound by residues L110, G142, and 161 to 166 (LSSMVL).

The protein belongs to the RNA methyltransferase RlmH family.

The chain is Putative RNA methyltransferase At5g10620 from Arabidopsis thaliana (Mouse-ear cress).